Here is a 363-residue protein sequence, read N- to C-terminus: Ribosome-binding ATPase YchF (363 aa).

An OBG-type G domain is found at 3–257; that stretch reads FKCGFVGLPN…VSAYDHLSLK (255 aa). 12-17 provides a ligand contact to ATP; sequence NVGKST. Mg(2+)-binding residues include Ser-16 and Thr-36. One can recognise a TGS domain in the interval 278-361; it reads NLITFFTAGK…CDGDIIHVLY (84 aa).

This sequence belongs to the TRAFAC class OBG-HflX-like GTPase superfamily. OBG GTPase family. YchF/OLA1 subfamily. Requires Mg(2+) as cofactor.

Its function is as follows. ATPase that binds to both the 70S ribosome and the 50S ribosomal subunit in a nucleotide-independent manner. The chain is Ribosome-binding ATPase YchF from Buchnera aphidicola subsp. Baizongia pistaciae (strain Bp).